Consider the following 245-residue polypeptide: Large ribosomal subunit protein uL29m (245 aa).

2 stretches are compositionally biased toward low complexity: residues 36–49 and 234–245; these read SFNS…TSSS and STKSETTTSKNI. Disordered regions lie at residues 36–98 and 207–245; these read SFNS…NPDH and RPSP…SKNI.

It belongs to the universal ribosomal protein uL29 family. In terms of assembly, component of the mitochondrial large ribosomal subunit. Mature mitochondrial ribosomes consist of a small (37S) and a large (54S) subunit. The 37S subunit contains at least 33 different proteins and 1 molecule of RNA (15S). The 54S subunit contains at least 45 different proteins and 1 molecule of RNA (21S).

Its subcellular location is the mitochondrion. The protein is Large ribosomal subunit protein uL29m (MRPL4) of Coccidioides immitis (strain RS) (Valley fever fungus).